Reading from the N-terminus, the 63-residue chain is Large ribosomal subunit protein bL35 (63 aa).

Belongs to the bacterial ribosomal protein bL35 family.

The sequence is that of Large ribosomal subunit protein bL35 from Campylobacter jejuni subsp. doylei (strain ATCC BAA-1458 / RM4099 / 269.97).